The primary structure comprises 380 residues: Cytochrome b (380 aa).

The next 4 helical transmembrane spans lie at 34 to 54 (FGSL…LLAM), 78 to 99 (WLIR…YLHI), 114 to 134 (WNTG…GYVL), and 179 to 199 (FFAL…IHLT). Heme b-binding residues include His84 and His98. 2 residues coordinate heme b: His183 and His197. His202 contacts a ubiquinone. 4 helical membrane-spanning segments follow: residues 227 to 247 (LKDI…ALFS), 289 to 309 (LGGV…PFLH), 321 to 341 (LSQL…WVGS), and 348 to 368 (FIII…ILFP).

The protein belongs to the cytochrome b family. The cytochrome bc1 complex contains 11 subunits: 3 respiratory subunits (MT-CYB, CYC1 and UQCRFS1), 2 core proteins (UQCRC1 and UQCRC2) and 6 low-molecular weight proteins (UQCRH/QCR6, UQCRB/QCR7, UQCRQ/QCR8, UQCR10/QCR9, UQCR11/QCR10 and a cleavage product of UQCRFS1). This cytochrome bc1 complex then forms a dimer. It depends on heme b as a cofactor.

Its subcellular location is the mitochondrion inner membrane. Component of the ubiquinol-cytochrome c reductase complex (complex III or cytochrome b-c1 complex) that is part of the mitochondrial respiratory chain. The b-c1 complex mediates electron transfer from ubiquinol to cytochrome c. Contributes to the generation of a proton gradient across the mitochondrial membrane that is then used for ATP synthesis. This chain is Cytochrome b (MT-CYB), found in Ardenna tenuirostris (Short-tailed shearwater).